The primary structure comprises 686 residues: Envelope glycoprotein H (686 aa).

Positions methionine 1–alanine 24 are cleaved as a signal peptide. The Virion surface segment spans residues alanine 25–proline 646. Residues asparagine 77, asparagine 162, asparagine 542, asparagine 604, and asparagine 627 are each glycosylated (N-linked (GlcNAc...) asparagine; by host). The interval proline 157–threonine 217 is interaction with gL. A helical membrane pass occupies residues alanine 647–phenylalanine 667. At lysine 668–serine 686 the chain is on the intravirion side.

It belongs to the herpesviridae glycoprotein H family. Interacts with glycoprotein L (gL); this interaction is necessary for the correct processing and cell surface expression of gH. The heterodimer gH/gL seems to interact with gB trimers during fusion. In terms of processing, N-glycosylated, O-glycosylated, and sialylated.

It is found in the virion membrane. Its subcellular location is the host cell membrane. The protein resides in the host endosome membrane. Functionally, the heterodimer glycoprotein H-glycoprotein L is required for the fusion of viral and plasma membranes leading to virus entry into the host cell. Following initial binding to host receptor, membrane fusion is mediated by the fusion machinery composed of gB and the heterodimer gH/gL. May also be involved in the fusion between the virion envelope and the outer nuclear membrane during virion morphogenesis. The chain is Envelope glycoprotein H from Sus scrofa (Pig).